Reading from the N-terminus, the 456-residue chain is Bifunctional protein GlmU (456 aa).

Positions 1 to 229 are pyrophosphorylase; it reads MLNNAMSVVI…LSEVEGVNNR (229 aa). UDP-N-acetyl-alpha-D-glucosamine contacts are provided by residues 11-14, Lys25, Gln76, 81-82, 103-105, Gly140, Glu154, Asn169, and Asn227; these read LAAG, GT, and YGD. Asp105 contributes to the Mg(2+) binding site. Asn227 serves as a coordination point for Mg(2+). The segment at 230-250 is linker; that stretch reads LQLSRLERVYQSEQAEKLLLA. The N-acetyltransferase stretch occupies residues 251–456; the sequence is GVMLRDPARF…EGWRRPVKKK (206 aa). Residues Arg333 and Lys351 each coordinate UDP-N-acetyl-alpha-D-glucosamine. Catalysis depends on His363, which acts as the Proton acceptor. UDP-N-acetyl-alpha-D-glucosamine-binding residues include Tyr366 and Asn377. Acetyl-CoA is bound by residues Ala380, 386-387, Ser405, Ala423, and Arg440; that span reads NY.

This sequence in the N-terminal section; belongs to the N-acetylglucosamine-1-phosphate uridyltransferase family. It in the C-terminal section; belongs to the transferase hexapeptide repeat family. Homotrimer. It depends on Mg(2+) as a cofactor.

It localises to the cytoplasm. It catalyses the reaction alpha-D-glucosamine 1-phosphate + acetyl-CoA = N-acetyl-alpha-D-glucosamine 1-phosphate + CoA + H(+). It carries out the reaction N-acetyl-alpha-D-glucosamine 1-phosphate + UTP + H(+) = UDP-N-acetyl-alpha-D-glucosamine + diphosphate. It functions in the pathway nucleotide-sugar biosynthesis; UDP-N-acetyl-alpha-D-glucosamine biosynthesis; N-acetyl-alpha-D-glucosamine 1-phosphate from alpha-D-glucosamine 6-phosphate (route II): step 2/2. Its pathway is nucleotide-sugar biosynthesis; UDP-N-acetyl-alpha-D-glucosamine biosynthesis; UDP-N-acetyl-alpha-D-glucosamine from N-acetyl-alpha-D-glucosamine 1-phosphate: step 1/1. It participates in bacterial outer membrane biogenesis; LPS lipid A biosynthesis. Its function is as follows. Catalyzes the last two sequential reactions in the de novo biosynthetic pathway for UDP-N-acetylglucosamine (UDP-GlcNAc). The C-terminal domain catalyzes the transfer of acetyl group from acetyl coenzyme A to glucosamine-1-phosphate (GlcN-1-P) to produce N-acetylglucosamine-1-phosphate (GlcNAc-1-P), which is converted into UDP-GlcNAc by the transfer of uridine 5-monophosphate (from uridine 5-triphosphate), a reaction catalyzed by the N-terminal domain. This chain is Bifunctional protein GlmU, found in Escherichia coli O127:H6 (strain E2348/69 / EPEC).